A 197-amino-acid chain; its full sequence is ATP-dependent Clp protease proteolytic subunit 1 (197 aa).

The active-site Nucleophile is the Ser99. The active site involves His124.

It belongs to the peptidase S14 family. In terms of assembly, fourteen ClpP subunits assemble into 2 heptameric rings which stack back to back to give a disk-like structure with a central cavity, resembling the structure of eukaryotic proteasomes.

Its subcellular location is the cytoplasm. It catalyses the reaction Hydrolysis of proteins to small peptides in the presence of ATP and magnesium. alpha-casein is the usual test substrate. In the absence of ATP, only oligopeptides shorter than five residues are hydrolyzed (such as succinyl-Leu-Tyr-|-NHMec, and Leu-Tyr-Leu-|-Tyr-Trp, in which cleavage of the -Tyr-|-Leu- and -Tyr-|-Trp bonds also occurs).. In terms of biological role, cleaves peptides in various proteins in a process that requires ATP hydrolysis. Has a chymotrypsin-like activity. Plays a major role in the degradation of misfolded proteins. This is ATP-dependent Clp protease proteolytic subunit 1 from Treponema denticola (strain ATCC 35405 / DSM 14222 / CIP 103919 / JCM 8153 / KCTC 15104).